Reading from the N-terminus, the 543-residue chain is EH domain-containing protein 2 (543 aa).

Ser-3 bears the Phosphoserine mark. The Dynamin-type G domain maps to 55-286 (FDGKPMVLVA…DLFRDIQGLP (232 aa)). Positions 65–72 (GQYSTGKT) are G1 motif. Residue 65 to 72 (GQYSTGKT) coordinates ATP. The segment at 91–92 (EP) is G2 motif. A KPF loop; caveolar targeting motif is present at residues 120 to 122 (KPF). The tract at residues 153 to 156 (DTPG) is G3 motif. The G4 motif stretch occupies residues 219–222 (NKAD). Lys-220 provides a ligand contact to ATP. Val-243 is a region of interest (G5 motif). Residue Trp-258 coordinates ATP. The segment at 320 to 340 (SVFGKENKKKQLILKLPVIFA) is mediates membrane-binding. A phosphoserine mark is found at Ser-438, Ser-468, Ser-470, Ser-484, and Ser-493. The region spanning 449-537 (DKSKYDEIFY…RRLVPPSKRR (89 aa)) is the EH domain. Positions 481–516 (LPNSVLGRIWKLSDVDRDGMLDDEEFALASHLIEAK) constitute an EF-hand domain. Ca(2+) contacts are provided by Asp-494, Asp-496, Asp-498, Met-500, and Glu-505. Residues 523-543 (PANLPRRLVPPSKRRHKGSAE) form a disordered region. The span at 534 to 543 (SKRRHKGSAE) shows a compositional bias: basic residues.

The protein belongs to the TRAFAC class dynamin-like GTPase superfamily. Dynamin/Fzo/YdjA family. EHD subfamily. As to quaternary structure, homodimer and homooligomer. Interacts with EHD1. May also interact with EHD3 and EHD4. Interacts with MYOF. Interacts with EHBP1. Interacts with FER1L5 (via second C2 domain). Interacts with CAV1 in a cholesterol-dependent manner. Interacts (via EH domain) with PACSIN2 (via NPF motifs); this interaction probably stabilizes the caveolae. As to expression, highly expressed in heart and moderately expressed in placenta, lung, and skeletal muscle.

The protein resides in the cell membrane. It localises to the membrane. It is found in the caveola. The protein localises to the endosome membrane. Its subcellular location is the cytoplasm. The protein resides in the cytosol. Its activity is regulated as follows. The very low intrinsic ATPase activity is increased upon interaction with liposomes. In terms of biological role, ATP- and membrane-binding protein that controls membrane reorganization/tubulation upon ATP hydrolysis. Plays a role in membrane trafficking between the plasma membrane and endosomes. Important for the internalization of GLUT4. Required for fusion of myoblasts to skeletal muscle myotubes. Required for normal translocation of FER1L5 to the plasma membrane. Regulates the equilibrium between cell surface-associated and cell surface-dissociated caveolae by constraining caveolae at the cell membrane. This chain is EH domain-containing protein 2, found in Homo sapiens (Human).